A 739-amino-acid chain; its full sequence is Probable beta-glucosidase L (739 aa).

The first 17 residues, 1–17, serve as a signal peptide directing secretion; that stretch reads MQTLFLSLLAAAVTVHA. 2 N-linked (GlcNAc...) asparagine glycosylation sites follow: Asn-40 and Asn-224. The active site involves Asp-252. A glycan (N-linked (GlcNAc...) asparagine) is linked at Asn-398.

Belongs to the glycosyl hydrolase 3 family.

Its subcellular location is the secreted. It catalyses the reaction Hydrolysis of terminal, non-reducing beta-D-glucosyl residues with release of beta-D-glucose.. The protein operates within glycan metabolism; cellulose degradation. Functionally, beta-glucosidases are one of a number of cellulolytic enzymes involved in the degradation of cellulosic biomass. Catalyzes the last step releasing glucose from the inhibitory cellobiose. The polypeptide is Probable beta-glucosidase L (bglL) (Aspergillus fumigatus (strain ATCC MYA-4609 / CBS 101355 / FGSC A1100 / Af293) (Neosartorya fumigata)).